A 218-amino-acid chain; its full sequence is MMP 1-O-methyltransferase (218 aa).

S-adenosyl-L-methionine-binding residues include F20, G46, S52, D71, G75, and S124. Residue D141 participates in Mg(2+) binding. Catalysis depends on H144, which acts as the Proton acceptor. Position 151 (R151) interacts with S-adenosyl-L-methionine. Residues H169 and D170 each coordinate Mg(2+).

The protein belongs to the methyltransferase superfamily. In terms of assembly, homodimer. Mg(2+) serves as cofactor.

It catalyses the reaction 3,3'-di-O-methyl-4alpha-mannobiose + S-adenosyl-L-methionine = 1,3,3'-tri-O-methyl-4alpha-mannobiose + S-adenosyl-L-homocysteine + H(+). Inhibited by EDTA. Its function is as follows. Involved in the biosynthesis of 3-O-methylmannose polysaccharides (MMP), which are intracellular polymethylated polysaccharides implicated in the modulation of fatty acid metabolism in non-tuberculous mycobacteria. Specifically methylates the 1-OH position of 3,3'-di-O-methyl-4alpha-mannobiose, a probable early precursor of MMP, yielding the reducing end dimannoside of MMP. The sequence is that of MMP 1-O-methyltransferase from Mycolicibacterium hassiacum (strain DSM 44199 / CIP 105218 / JCM 12690 / 3849) (Mycobacterium hassiacum).